We begin with the raw amino-acid sequence, 1453 residues long: DNA-directed RNA polymerase IV subunit 1 (1453 aa).

7 residues coordinate Zn(2+): Cys56, Cys59, Cys67, His70, Cys97, Cys100, and Cys121. 3 residues coordinate Mg(2+): Asp447, Asp449, and Asp451. A bridging helix region spans residues 806-818 (PLESFVHSVTSRD).

Belongs to the RNA polymerase beta' chain family. Component of the RNA polymerase IV complex. Interacts with NRPD2, NRPD3, NRPD3B, NRPD4, NRPD5, NRPD5B, NRPD6A, NRPD7, NRPD7B, NRPD9A, NRPD9B, NRPD10, NRPD11, NRPD12, RDR2, RDM4, CLSY1, CLSY2, CLSY3, CLSY4 and SHH1. In terms of tissue distribution, mostly expressed in flowers, and, to a lower extent, in leaves.

It is found in the nucleus. It catalyses the reaction RNA(n) + a ribonucleoside 5'-triphosphate = RNA(n+1) + diphosphate. Its function is as follows. DNA-dependent RNA polymerase catalyzes the transcription of DNA into RNA using the four ribonucleoside triphosphates as substrates. Largest and catalytic component of RNA polymerase IV which mediates 24-nt short-interfering RNAs (siRNA) accumulation. Implicated in siRNA-directed heterochromatin formation through the action of DCL3 and AGO4, and subsequent DNA methylation-dependent silencing of targeted sequences. Essential component of a self-reinforcing loop coupling de novo DNA methylation to siRNA production. Required for intercellular but not intracellular RNA interference (RNAi) leading to systemic post-transcriptional gene silencing. Involved in the maintenance of post-transcriptional RNA silencing. The polypeptide is DNA-directed RNA polymerase IV subunit 1 (NRPD1) (Arabidopsis thaliana (Mouse-ear cress)).